The primary structure comprises 469 residues: A-type ATP synthase subunit B (469 aa).

It belongs to the ATPase alpha/beta chains family. As to quaternary structure, has multiple subunits with at least A(3), B(3), C, D, E, F, H, I and proteolipid K(x).

It localises to the cell membrane. Component of the A-type ATP synthase that produces ATP from ADP in the presence of a proton gradient across the membrane. The B chain is a regulatory subunit. The polypeptide is A-type ATP synthase subunit B (Staphylothermus marinus (strain ATCC 43588 / DSM 3639 / JCM 9404 / F1)).